A 393-amino-acid chain; its full sequence is Probable acetyl-CoA acetyltransferase (393 aa).

T2 is a propeptide (removed; alternate). The active-site Acyl-thioester intermediate is the C88. Catalysis depends on proton acceptor residues H349 and C379.

It belongs to the thiolase-like superfamily. Thiolase family.

It catalyses the reaction 2 acetyl-CoA = acetoacetyl-CoA + CoA. This chain is Probable acetyl-CoA acetyltransferase (fadA4), found in Mycobacterium tuberculosis (strain ATCC 25618 / H37Rv).